A 49-amino-acid chain; its full sequence is SPbeta prophage-derived uncharacterized protein YoqT (49 aa).

Residues 7–29 traverse the membrane as a helical segment; sequence CFVNWSFDKIMDYILIAGLYFVF.

The protein localises to the cell membrane. In Bacillus subtilis (strain 168), this protein is SPbeta prophage-derived uncharacterized protein YoqT (yoqT).